The primary structure comprises 163 residues: RNA pyrophosphohydrolase (163 aa).

One can recognise a Nudix hydrolase domain in the interval 6–149; it reads GYRLNVGIVI…KRDVYRQVMK (144 aa). Residues 38 to 59 carry the Nudix box motif; sequence GGIHLTESPEEAMYRELFEELG.

It belongs to the Nudix hydrolase family. RppH subfamily. It depends on a divalent metal cation as a cofactor.

In terms of biological role, accelerates the degradation of transcripts by removing pyrophosphate from the 5'-end of triphosphorylated RNA, leading to a more labile monophosphorylated state that can stimulate subsequent ribonuclease cleavage. The sequence is that of RNA pyrophosphohydrolase from Hamiltonella defensa subsp. Acyrthosiphon pisum (strain 5AT).